The following is a 210-amino-acid chain: Uracil phosphoribosyltransferase (210 aa).

5-phospho-alpha-D-ribose 1-diphosphate contacts are provided by residues Arg-78, Arg-103, and Asp-130–Thr-138. Uracil is bound by residues Ile-193 and Gly-198–Ala-200. Residue Asp-199 participates in 5-phospho-alpha-D-ribose 1-diphosphate binding.

Belongs to the UPRTase family. Mg(2+) serves as cofactor.

It catalyses the reaction UMP + diphosphate = 5-phospho-alpha-D-ribose 1-diphosphate + uracil. It functions in the pathway pyrimidine metabolism; UMP biosynthesis via salvage pathway; UMP from uracil: step 1/1. With respect to regulation, allosterically activated by GTP. In terms of biological role, catalyzes the conversion of uracil and 5-phospho-alpha-D-ribose 1-diphosphate (PRPP) to UMP and diphosphate. This chain is Uracil phosphoribosyltransferase, found in Xanthomonas euvesicatoria pv. vesicatoria (strain 85-10) (Xanthomonas campestris pv. vesicatoria).